Here is a 340-residue protein sequence, read N- to C-terminus: Ribose-phosphate pyrophosphokinase (340 aa).

ATP-binding positions include 47 to 49 and 106 to 107; these read NGE and RQ. Positions 140 and 182 each coordinate Mg(2+). Residue K206 is part of the active site. D-ribose 5-phosphate-binding positions include R208, D234, and 238–242; that span reads DTAGT.

It belongs to the ribose-phosphate pyrophosphokinase family. Class I subfamily. As to quaternary structure, homohexamer. Mg(2+) is required as a cofactor.

Its subcellular location is the cytoplasm. The catalysed reaction is D-ribose 5-phosphate + ATP = 5-phospho-alpha-D-ribose 1-diphosphate + AMP + H(+). It participates in metabolic intermediate biosynthesis; 5-phospho-alpha-D-ribose 1-diphosphate biosynthesis; 5-phospho-alpha-D-ribose 1-diphosphate from D-ribose 5-phosphate (route I): step 1/1. In terms of biological role, involved in the biosynthesis of the central metabolite phospho-alpha-D-ribosyl-1-pyrophosphate (PRPP) via the transfer of pyrophosphoryl group from ATP to 1-hydroxyl of ribose-5-phosphate (Rib-5-P). This is Ribose-phosphate pyrophosphokinase from Bifidobacterium longum (strain NCC 2705).